We begin with the raw amino-acid sequence, 95 residues long: MLRTTVSKLARPTVSRAFATTSRALAGETGAPPKTGGPGDAFQRREKANEDFAIRQREKEKLLELKKKLAEQQKHLKTLSDHIDEITREQGGERN.

A mitochondrion-targeting transit peptide spans 1–25 (MLRTTVSKLARPTVSRAFATTSRAL). Disordered stretches follow at residues 20–48 (TTSR…REKA) and 76–95 (LKTL…GERN).

Belongs to the ATPase inhibitor family. Associates with the mitochondrial small ribosomal subunit (mt-SSU). IF(1) coiled-coil forms a helical bundle with the C-terminal extension of uS17m and also binds to mS27 in the mtSSU tail. Since the C-terminal extension of uS17m stabilizing the IF(1) on the mt-SSU is specific to N.crassa, IF(1) binding might also be specific.

Its subcellular location is the mitochondrion. Functionally, endogenous F(1)F(0)-ATPase inhibitor limiting ATP depletion when the mitochondrial membrane potential falls below a threshold and the F(1)F(0)-ATP synthase starts hydrolyzing ATP to pump protons out of the mitochondrial matrix. Required to avoid the consumption of cellular ATP when the F(1)F(0)-ATP synthase enzyme acts as an ATP hydrolase. Functions through inserting its N-terminal part into the catalytically active F1-ATPase, thereby blocking its rotational movement and subsequently the ATP hydrolase activity. This chain is F(1)-ATPase inhibitor IF(1), mitochondrial (inh1), found in Neurospora crassa (strain ATCC 24698 / 74-OR23-1A / CBS 708.71 / DSM 1257 / FGSC 987).